Here is a 157-residue protein sequence, read N- to C-terminus: Class I hydrophobin rodA (157 aa).

The N-terminal stretch at Met-1–Lys-41 is a signal peptide. Asn-47 carries an N-linked (GlcNAc...) asparagine glycan. Disulfide bonds link Cys-57-Cys-131, Cys-65-Cys-125, Cys-66-Cys-106, and Cys-132-Cys-150.

It belongs to the fungal hydrophobin family. In terms of assembly, self-assembles to form functional amyloid fibrils called rodlets. Self-assembly into fibrillar rodlets occurs spontaneously at hydrophobic:hydrophilic interfaces and the rodlets further associate laterally to form amphipathic monolayers.

It localises to the secreted. Its subcellular location is the spore wall. Aerial growth, conidiation, and dispersal of filamentous fungi in the environment rely upon a capability of their secreting small amphipathic proteins called hydrophobins (HPBs) with low sequence identity. Class I can self-assemble into an outermost layer of rodlet bundles on aerial cell surfaces, conferring cellular hydrophobicity that supports fungal growth, development and dispersal; whereas Class II form highly ordered films at water-air interfaces through intermolecular interactions but contribute nothing to the rodlet structure. RodA is a class I hydrophobin that contributes to surface hydrophobicity, which is important for processes such as association of hyphae in reproductive structures, dispersal of aerial spores and adhesion of pathogens to host structures. Important for the formation of hydrophobic rodlet layers of asexually-produced spores. Promotes also biofilm formation and may enhance lignocellulose utilization via promoting a compact substrate-enzyme-fungus structure. This is Class I hydrophobin rodA from Emericella nidulans (strain FGSC A4 / ATCC 38163 / CBS 112.46 / NRRL 194 / M139) (Aspergillus nidulans).